The sequence spans 159 residues: RNA pyrophosphohydrolase (159 aa).

The 144-residue stretch at 6 to 149 folds into the Nudix hydrolase domain; that stretch reads GFRPNVGIIL…KREVYRRALK (144 aa). The Nudix box signature appears at 38–59; sequence GGINPDETPEDALYRELNEEVG.

Belongs to the Nudix hydrolase family. RppH subfamily. Requires a divalent metal cation as cofactor.

Functionally, accelerates the degradation of transcripts by removing pyrophosphate from the 5'-end of triphosphorylated RNA, leading to a more labile monophosphorylated state that can stimulate subsequent ribonuclease cleavage. This Pseudomonas fluorescens (strain SBW25) protein is RNA pyrophosphohydrolase.